A 299-amino-acid chain; its full sequence is tRNA-cytidine(32) 2-sulfurtransferase (299 aa).

A PP-loop motif motif is present at residues 56-61; sequence SGGKDS. Residues C131, C134, and C222 each contribute to the [4Fe-4S] cluster site.

It belongs to the TtcA family. As to quaternary structure, homodimer. Mg(2+) serves as cofactor. It depends on [4Fe-4S] cluster as a cofactor.

Its subcellular location is the cytoplasm. The enzyme catalyses cytidine(32) in tRNA + S-sulfanyl-L-cysteinyl-[cysteine desulfurase] + AH2 + ATP = 2-thiocytidine(32) in tRNA + L-cysteinyl-[cysteine desulfurase] + A + AMP + diphosphate + H(+). It participates in tRNA modification. Functionally, catalyzes the ATP-dependent 2-thiolation of cytidine in position 32 of tRNA, to form 2-thiocytidine (s(2)C32). The sulfur atoms are provided by the cysteine/cysteine desulfurase (IscS) system. In Xylella fastidiosa (strain M23), this protein is tRNA-cytidine(32) 2-sulfurtransferase.